Reading from the N-terminus, the 396-residue chain is G-protein coupled receptor 84 (396 aa).

The Extracellular segment spans residues 1 to 26; sequence MWNASDVNFSCYHESVLGYRYVAVSW. N-linked (GlcNAc...) asparagine glycans are attached at residues Asn-3 and Asn-8. Residues 27–47 form a helical membrane-spanning segment; it reads GIVVAVTGTVGNVLTLLALAI. Residues 48-57 are Cytoplasmic-facing; sequence QPKLRTRFNL. A helical membrane pass occupies residues 58–78; sequence LIANLTVADLLYCTLLQPFSV. The Extracellular segment spans residues 79–94; the sequence is DTYLHLHWRTGATFCQ. Residues 95–115 traverse the membrane as a helical segment; sequence IFGFLLFVSNSVSILTLCLIA. The Cytoplasmic segment spans residues 116-144; the sequence is LGRYLLIAHPKLFPQVFSAKGIVLALVST. A helical transmembrane segment spans residues 145–165; sequence WVVAVASFAPLWPIYILVPVV. The Extracellular portion of the chain corresponds to 166–180; sequence CTCSFDRIRGQPYTT. The helical transmembrane segment at 181–201 threads the bilayer; the sequence is ILMGIYFVVGLSSVGVFYCLI. Topologically, residues 202–320 are cytoplasmic; sequence HQQVKRAAQA…PSEFGKVTRM (119 aa). Ser-221 and Ser-224 each carry phosphoserine. Positions 243–310 are disordered; it reads SGLASGGPSE…TKGAQRAQDS (68 aa). Phosphothreonine is present on residues Thr-263 and Thr-264. Residues 321–341 form a helical membrane-spanning segment; the sequence is CFAVFLCFTLSYIPFLLLNIL. The Extracellular portion of the chain corresponds to 342 to 352; that stretch reads DAKVQAPRVVH. A helical transmembrane segment spans residues 353–373; the sequence is MLAANLTWLNGCINPVLYAAM. The Cytoplasmic segment spans residues 374–396; sequence NRQFRQAYGSLLRRGPQSFHRFH.

The protein belongs to the G-protein coupled receptor 1 family. Interacts with ARRB2 and ARR3. Post-translationally, phosphorylated by a subset of GPR84-activating ligands. Constitutively phosphorylated at Ser-221 and Ser-224 in the absence of 2-HTP. By contrast, Thr-263 and Thr-264 are phosphorylated only following prior cell treatment with 2-HTP.

Its subcellular location is the cell membrane. Its function is as follows. G protein-coupled receptor that responds endogenously to dietary fatty acids or nutrient, specifically medium-chain free fatty acid (FFA) with carbon chain lengths of C9 to C14. Capric acid (C10:0), undecanoic acid (C11:0) and lauric acid (C12:0) are the most potent agonists. In immune cells, functions as a pro-inflammatory receptor via 6-OAU and promotes the expression of pro-inflammatory mediators such as TNFalpha, IL-6 and IL-12B as well as stimulating chemotactic responses through activation of signaling mediators AKT, ERK and NF-kappa-B. In addition, triggers increased bacterial adhesion and phagocytosis in macrophages and regulates pro-inflammatory function via enhancing NLRP3 inflammasome activation. Also plays an important role in inflammation by modulating neutrophil functions. Mechanistically, promotes neutrophil chemotaxis, reactive oxygen species (ROS) production and degranulation via LYN-AKT/ERK pathway. To regulate ROS, communicates with the two formyl peptide receptors FPR2 and FPR1 to control the NADPH oxidase activity in neutrophils. In Bos taurus (Bovine), this protein is G-protein coupled receptor 84 (GPR84).